Consider the following 471-residue polypeptide: Eremophilane O-acetyltransferase prx11 (471 aa).

The protein belongs to the fumigaclavine B O-acetyltransferase family. Monomer.

The protein operates within sesquiterpene biosynthesis. In terms of biological role, O-acetyltransferase; part of the gene cluster that mediates the biosynthesis of PR-toxin, a bicyclic sesquiterpene belonging to the eremophilane class and acting as a mycotoxin. The first step of the pathway is catalyzed by the aristolochene synthase which performs the cyclization of trans,trans-farnesyl diphosphate (FPP) to the bicyclic sesquiterpene aristolochene. Following the formation of aristolochene, the non-oxygenated aristolochene is converted to the trioxygenated intermediate eremofortin B, via 7-epi-neopetasone. This conversion appears to involve three enzymes, a hydroxysterol oxidase-like enzyme, the quinone-oxidase prx3 that forms the quinone-type-structure in the bicyclic nucleus of aristolochene with the C8-oxo group and the C-3 hydroxyl group, and the P450 monooxygenase prx9 that introduces the epoxide at the double bond between carbons 1 and 2. No monoxy or dioxy-intermediates have been reported to be released to the broth, so these three early oxidative reactions may be coupled together. Eremofortin B is further oxidized by another P450 monooxygenase, that introduces a second epoxide between carbons 7 and 11 prior to acetylation to eremofortin A by the acetyltransferase prx11. The second epoxidation may be performed by a second P450 monooxygenase. After the acetylation step, eremofortin A is converted to eremofortin C and then to PR-toxin. First the conversion of eremofortin A to eremofortin C proceeds by oxidation of the side chain of the molecule at C-12 and is catalyzed by the short-chain oxidoreductase prx1. The cytochrome P450 monooxygenase prx8 also plays a role in this step. The primary alcohol formed at C-12 is finally oxidized by the short-chain alcohol dehydrogenase prx4 that forms PR-toxin. This chain is Eremophilane O-acetyltransferase prx11, found in Penicillium rubens (strain ATCC 28089 / DSM 1075 / NRRL 1951 / Wisconsin 54-1255) (Penicillium chrysogenum).